The following is a 280-amino-acid chain: Tobamovirus multiplication protein 2A (280 aa).

Residues 1 to 13 are Cytoplasmic-facing; it reads MACRGCLECLLKL. Residues 14 to 34 traverse the membrane as a helical segment; that stretch reads LNFLLAVAGLGMIGYGIYLFV. At 35-78 the chain is on the extracellular side; it reads EYKRVTDNSVTFDLTNGDQSYVSFGRPILMAVSLSSNIFDNLPK. A helical membrane pass occupies residues 79–99; it reads AWFIYLFIGIGVALFVISCCG. At 100–113 the chain is on the cytoplasmic side; the sequence is CVGTCSRSVCCLSC. A helical membrane pass occupies residues 114-134; the sequence is YSLLLILLILVELGFAAFIFF. The Extracellular segment spans residues 135 to 162; that stretch reads DNSWRDELPSDRTGNFDTIYNFLRENWK. The chain crosses the membrane as a helical span at residues 163–183; the sequence is IVRWVALGAVVFEALLFLLAL. Residues 184 to 280 are Cytoplasmic-facing; that stretch reads MVRAANTPAE…NEEKGRCTIM (97 aa). 2 positions are modified to phosphoserine: Ser-196 and Ser-233. Residues 258 to 280 form a disordered region; that stretch reads SESHRFQQMPAQPNEEKGRCTIM. Basic and acidic residues predominate over residues 271 to 280; that stretch reads NEEKGRCTIM.

It belongs to the tetraspanin (TM4SF) family. In terms of assembly, homodimer. Constituent of tobamovirus replication complex. Interacts with TOM1. In terms of tissue distribution, expressed in rosette leaves.

The protein resides in the vacuole membrane. In terms of biological role, necessary for the efficient intracellular multiplication of tobamoviruses, being a component of the replication complex. This Arabidopsis thaliana (Mouse-ear cress) protein is Tobamovirus multiplication protein 2A (TOM2A).